The chain runs to 83 residues: Apolipoprotein C-I, basic form (83 aa).

The signal sequence occupies residues 1–26 (MRLFLSLPVLVVVLSMVLEGPAPAQG).

The protein belongs to the apolipoprotein C1 family.

Its subcellular location is the secreted. In terms of biological role, inhibitor of lipoprotein binding to the low density lipoprotein (LDL) receptor, LDL receptor-related protein, and very low density lipoprotein (VLDL) receptor. Associates with high density lipoproteins (HDL) and the triacylglycerol-rich lipoproteins in the plasma and makes up about 10% of the protein of the VLDL and 2% of that of HDL. Appears to interfere directly with fatty acid uptake and is also the major plasma inhibitor of cholesteryl ester transfer protein (CETP). Binds free fatty acids and reduces their intracellular esterification. Modulates the interaction of APOE with beta-migrating VLDL and inhibits binding of beta-VLDL to the LDL receptor-related protein. This Cercocebus atys (Sooty mangabey) protein is Apolipoprotein C-I, basic form (APOC1B).